A 439-amino-acid chain; its full sequence is Ribosomal protein uS12 methylthiotransferase RimO (439 aa).

In terms of domain architecture, MTTase N-terminal spans Q7–F122. [4Fe-4S] cluster contacts are provided by C16, C52, C85, C155, C159, and C162. The 229-residue stretch at S141 to K369 folds into the Radical SAM core domain.

It belongs to the methylthiotransferase family. RimO subfamily. [4Fe-4S] cluster serves as cofactor.

The protein localises to the cytoplasm. The catalysed reaction is L-aspartate(89)-[ribosomal protein uS12]-hydrogen + (sulfur carrier)-SH + AH2 + 2 S-adenosyl-L-methionine = 3-methylsulfanyl-L-aspartate(89)-[ribosomal protein uS12]-hydrogen + (sulfur carrier)-H + 5'-deoxyadenosine + L-methionine + A + S-adenosyl-L-homocysteine + 2 H(+). Its function is as follows. Catalyzes the methylthiolation of an aspartic acid residue of ribosomal protein uS12. The polypeptide is Ribosomal protein uS12 methylthiotransferase RimO (Endomicrobium trichonymphae).